Here is a 295-residue protein sequence, read N- to C-terminus: Nucleotide-binding protein BH3569 (295 aa).

14–21 (GMSGAGKT) is a binding site for ATP. A GTP-binding site is contributed by 65-68 (DLRG).

Belongs to the RapZ-like family.

Its function is as follows. Displays ATPase and GTPase activities. The chain is Nucleotide-binding protein BH3569 from Halalkalibacterium halodurans (strain ATCC BAA-125 / DSM 18197 / FERM 7344 / JCM 9153 / C-125) (Bacillus halodurans).